The following is a 377-amino-acid chain: 23S rRNA (uracil(747)-C(5))-methyltransferase RlmC (377 aa).

[4Fe-4S] cluster-binding residues include Cys-3, Cys-11, Cys-14, and Cys-87. 4 residues coordinate S-adenosyl-L-methionine: Gln-212, Phe-241, Glu-262, and Asn-307. Cys-334 serves as the catalytic Nucleophile.

Belongs to the class I-like SAM-binding methyltransferase superfamily. RNA M5U methyltransferase family. RlmC subfamily.

It catalyses the reaction uridine(747) in 23S rRNA + S-adenosyl-L-methionine = 5-methyluridine(747) in 23S rRNA + S-adenosyl-L-homocysteine + H(+). Catalyzes the formation of 5-methyl-uridine at position 747 (m5U747) in 23S rRNA. In Edwardsiella ictaluri (strain 93-146), this protein is 23S rRNA (uracil(747)-C(5))-methyltransferase RlmC.